Reading from the N-terminus, the 208-residue chain is Cytochrome c oxidase assembly protein CtaG (208 aa).

Over 1–19 (MKQRPTGPDTTPRNRRGFG) the chain is Cytoplasmic. Residues 20-42 (RDTAVASVCGLVVALMVGASYAA) traverse the membrane as a helical; Signal-anchor for type II membrane protein segment. Residues 43-208 (VPFYNWFCRV…SEAGPRQGAL (166 aa)) lie on the Periplasmic side of the membrane.

It belongs to the COX11/CtaG family.

Its subcellular location is the cell inner membrane. Its function is as follows. Exerts its effect at some terminal stage of cytochrome c oxidase synthesis, probably by being involved in the insertion of the copper B into subunit I. This chain is Cytochrome c oxidase assembly protein CtaG, found in Rhodopseudomonas palustris (strain BisA53).